A 264-amino-acid chain; its full sequence is 2-hydroxyhexa-2,4-dienoate hydratase (264 aa).

The protein belongs to the hydratase/decarboxylase family.

It catalyses the reaction (2Z,4Z)-2-hydroxyhexa-2,4-dienoate + H2O = 4-hydroxy-2-oxohexanoate. Its function is as follows. Involved in the catatabolism of testosterone. Catalyzes the hydration of 2-hydroxyhexa-2,4-dienoic acid to 4-hydroxy-2-oxohexanoic acid. This Comamonas testosteroni (Pseudomonas testosteroni) protein is 2-hydroxyhexa-2,4-dienoate hydratase (tesE).